Consider the following 280-residue polypeptide: MNLVAALVLCFALLSSVRGDDTTNTIDHDQVKPFPQPEPVTISEKAAVKYKPQLEIGDGCVSFPAVNAAGEITGGLKGTKDTEACTEAPLGSQVYGRSTWFQDKWAMMYSWYFPKNFCAYKAAGRHDWANVVIWIDNPAAENVTFLGASLSQQTLEPIKLAILPMGTRNEEPYQNQKAIPMMAFAGAERITTGRVGRWSYTYKYVAGSNTTMRFSHSYPGTWGWIDMTFADSDGESQDLIMWNQLTDKARAALESADFGDTQVPFTDKNFDTNLQAAWPF.

The first 19 residues, 1 to 19, serve as a signal peptide directing secretion; sequence MNLVAALVLCFALLSSVRG. The Hepta-peptide GHRHDWE motif signature appears at 123–129; it reads AGRHDWA. Residues N142 and N209 are each glycosylated (N-linked (GlcNAc...) asparagine).

It belongs to the Necrosis inducing protein (NPP1) family.

Its subcellular location is the secreted. Functionally, secreted effector that contributes strongly to virulence during infection by P.capsici. The chain is NLP effector protein Pc553546 from Phytophthora capsici.